We begin with the raw amino-acid sequence, 791 residues long: Ataxin-2 homolog (791 aa).

Over residues 1 to 22 (MATRSVSMKQTSQRAASPNKTQ) the composition is skewed to polar residues. 8 disordered regions span residues 1–28 (MATR…KKWS), 60–100 (RGGV…QQRV), 112–134 (RTET…GVPL), 235–311 (TRSN…KEGQ), 326–423 (SLDS…TKLG), 452–505 (KPAP…PVSS), 613–634 (NPSQ…GNSS), and 707–791 (PMYG…EAKP). Residues 76 to 96 (SLASSEENVSSVSGSAKSNNS) show a composition bias toward low complexity. Composition is skewed to basic and acidic residues over residues 112 to 125 (RTET…RWMP) and 243 to 256 (NNKD…EAPH). A compositionally biased stretch (polar residues) spans 326–337 (SLDSKQPSSTKS). 2 stretches are compositionally biased toward basic and acidic residues: residues 360–371 (DSKEPRKEEAEK) and 395–418 (SKEE…KETT). Over residues 473-486 (SIPSTTPQSPSVVS) the composition is skewed to low complexity. The span at 487-497 (NGENKPSSSPV) shows a compositional bias: polar residues. Low complexity-rich tracts occupy residues 715–725 (SNSQRSFNSSN) and 734–760 (NNNA…NTTA). The span at 774-791 (DATEKTEKDASANQEAKP) shows a compositional bias: basic and acidic residues.

This sequence belongs to the ataxin-2 family. In terms of assembly, interacts with mkt1.

The protein resides in the cytoplasm. Involved in post-transcriptional regulation of gene expression, probably by association with mkt1. This chain is Ataxin-2 homolog, found in Schizosaccharomyces pombe (strain 972 / ATCC 24843) (Fission yeast).